Reading from the N-terminus, the 757-residue chain is Receptor protein kinase-like protein At4g34220 (757 aa).

The signal sequence occupies residues 1–26; that stretch reads MTSNRSNLLFSLVLFHFLFVPTQLQA. 7 LRR repeats span residues 104 to 126, 128 to 150, 152 to 174, 176 to 198, 199 to 219, 220 to 242, and 245 to 267; these read YLRILDLSSNFFNGSLPDSVFNA, ELQSISLGSNNLSGDLPKSVNSV, NLQLLNLSANAFTGEIPLNISLL, NLTVVSLSKNTFSGDIPSGFEAA, QILDLSSNLLNGSLPKDLGGK, SLHYLNLSHNKVLGEISPNFAEK, and ANATVDLSFNNLTGPIPSSLSLL. A helical transmembrane segment spans residues 339–359; sequence IAAITVADIVGLAFIGLLVLY. One can recognise a Protein kinase domain in the interval 471–753; it reads KASAYILGTT…KELVQVLEKI (283 aa). At S473 the chain carries Phosphoserine. At T494 the chain carries Phosphothreonine. S553 is subject to Phosphoserine. The tract at residues 633-654 is disordered; the sequence is ARESHTTGPTSSSPYQPPEWST. 2 positions are modified to phosphothreonine: T638 and T639. The span at 638–654 shows a compositional bias: polar residues; sequence TTGPTSSSPYQPPEWST.

Belongs to the protein kinase superfamily.

The protein localises to the membrane. The sequence is that of Receptor protein kinase-like protein At4g34220 from Arabidopsis thaliana (Mouse-ear cress).